The sequence spans 711 residues: MLNPIVRKFQYGQHTVTLETGMMARQATAAVMVSMDDTAVFVTVVGQKKTKPGQDFFPLTVNYQERTYAAGKIPGGFFRREGRPSEGETLIARLIDRPVRPLFPEGFINEVQVIATVVSVNPQVNPDIVAMIGASAALSLSGLPFNGPIGSARVGYINDQYVLNPTQDELKESKLDLVVAGTEAAVLMVESEAELLSEDQMLGAVVFGHEQQQIVIENIKDLVKEAGKPRWDWQPEAVNEALNARVAALAEARLSDAYRITDKQERYAQIDVIKSETIATLVAEDESLDANELSEILHAIEKNAVRSRVLAGEPRIDGREKDMIRGLDVRTGVLPRTHGSALFTRGETQALVTATLGTARDAQNIDELMGDRTDSFLFHYNFPPYSVGETGMVGSPKRREIGHGRLAKRGVLAVMPEADKFPYTVRVVSEITESNGSSSMASVCGASLALMDAGVPIKAAVAGIAMGLVKEGDNFVVLSDILGDEDHLGDMDFKVAGSREGISALQMDIKIEGITKEIMQVALNQAKGARLHILGVMEQAINAPRGDISQFAPRIHTIKISPDKIKDVIGKGGSVIRALTEETGTTIEIEDDGTVKIAATDGEKAKFAIRRIEEITAEIEVGRIYNGKVTRIVDFGAFVAIGGGKEGLVHISQIADKRVEKVTDYLQMGQEVPVKVLEVDRQGRVRLSIKEATEQTQPAAAPEAPAAEQGE.

Asp486 and Asp492 together coordinate Mg(2+). The region spanning 553–612 (PRIHTIKISPDKIKDVIGKGGSVIRALTEETGTTIEIEDDGTVKIAATDGEKAKFAIRRI) is the KH domain. In terms of domain architecture, S1 motif spans 622 to 690 (GRIYNGKVTR…RQGRVRLSIK (69 aa)). A disordered region spans residues 690–711 (KEATEQTQPAAAPEAPAAEQGE). A compositionally biased stretch (low complexity) spans 694 to 711 (EQTQPAAAPEAPAAEQGE).

The protein belongs to the polyribonucleotide nucleotidyltransferase family. Component of the RNA degradosome, which is a multiprotein complex involved in RNA processing and mRNA degradation. It depends on Mg(2+) as a cofactor.

It localises to the cytoplasm. The catalysed reaction is RNA(n+1) + phosphate = RNA(n) + a ribonucleoside 5'-diphosphate. Involved in mRNA degradation. Catalyzes the phosphorolysis of single-stranded polyribonucleotides processively in the 3'- to 5'-direction. This is Polyribonucleotide nucleotidyltransferase from Enterobacter sp. (strain 638).